The following is a 383-amino-acid chain: Xylose/arabinose import ATP-binding protein XacK (383 aa).

One can recognise an ABC transporter domain in the interval 4–240; sequence LTLDDVTKVY…PNNLFVAGFI (237 aa). ATP is bound at residue 41–48; sequence GPSGCGKS.

It belongs to the ABC transporter superfamily. Carbohydrate uptake transporter-1 (CUT1) (TC 3.A.1.1) family. The complex is composed of two ATP-binding proteins (XacJ and XacK), two transmembrane proteins (XacH and XacI) and a solute-binding protein (XacG).

The protein localises to the cell membrane. It catalyses the reaction D-xylose(out) + ATP + H2O = D-xylose(in) + ADP + phosphate + H(+). The catalysed reaction is L-arabinose(out) + ATP + H2O = L-arabinose(in) + ADP + phosphate + H(+). Functionally, part of the ABC transporter complex XacGHIJK involved in the uptake of xylose and arabinose. Responsible for energy coupling to the transport system. This is Xylose/arabinose import ATP-binding protein XacK from Haloferax volcanii (strain ATCC 29605 / DSM 3757 / JCM 8879 / NBRC 14742 / NCIMB 2012 / VKM B-1768 / DS2) (Halobacterium volcanii).